Here is a 471-residue protein sequence, read N- to C-terminus: Ribulose bisphosphate carboxylase large chain (471 aa).

The substrate site is built by Asn-115 and Thr-165. Lys-167 (proton acceptor) is an active-site residue. A substrate-binding site is contributed by Lys-169. The Mg(2+) site is built by Lys-193, Asp-195, and Glu-196. The residue at position 193 (Lys-193) is an N6-carboxylysine. Residue His-286 is the Proton acceptor of the active site. Residues Arg-287, His-319, and Ser-371 each coordinate substrate.

It belongs to the RuBisCO large chain family. Type I subfamily. Heterohexadecamer of 8 large chains and 8 small chains. Mg(2+) is required as a cofactor.

The protein localises to the carboxysome. It catalyses the reaction 2 (2R)-3-phosphoglycerate + 2 H(+) = D-ribulose 1,5-bisphosphate + CO2 + H2O. The enzyme catalyses D-ribulose 1,5-bisphosphate + O2 = 2-phosphoglycolate + (2R)-3-phosphoglycerate + 2 H(+). RuBisCO catalyzes two reactions: the carboxylation of D-ribulose 1,5-bisphosphate, the primary event in carbon dioxide fixation, as well as the oxidative fragmentation of the pentose substrate in the photorespiration process. Both reactions occur simultaneously and in competition at the same active site. The polypeptide is Ribulose bisphosphate carboxylase large chain (Prochlorococcus marinus (strain MIT 9515)).